Here is a 502-residue protein sequence, read N- to C-terminus: Cytochrome P450 71B20 (502 aa).

A helical transmembrane segment spans residues 1-21; it reads MAISFLCFCLITLASLIFFAK. Cys444 is a binding site for heme.

This sequence belongs to the cytochrome P450 family. Heme serves as cofactor.

Its subcellular location is the membrane. This Arabidopsis thaliana (Mouse-ear cress) protein is Cytochrome P450 71B20 (CYP71B20).